Consider the following 417-residue polypeptide: uncharacterized protein (417 aa).

A signal peptide spans methionine 1–asparagine 21.

This is an uncharacterized protein from Methanocaldococcus jannaschii (strain ATCC 43067 / DSM 2661 / JAL-1 / JCM 10045 / NBRC 100440) (Methanococcus jannaschii).